Here is a 235-residue protein sequence, read N- to C-terminus: MEPKRVAEGKTKIVYEFDPEHYLLRFKDSITAGDGARKDELPGKGTLNAQTSALFFRLLEKNDIRTHYVGMYDEKTMIVTKLKMIPVEVVLRNIATGSIVKRLPIKEGEVFDPPIVEFFLKDDLRHDPLLNYSHLQYFNLLTRKEAEIVEEVIVKVNAVMKNFLKERGLVLYDLKLEFGKDKDNNLIVGDEITLDSMRVRDEKTNKILDKDLYRKGESLEVVKKAYEDFFNLISR.

It belongs to the SAICAR synthetase family.

It catalyses the reaction 5-amino-1-(5-phospho-D-ribosyl)imidazole-4-carboxylate + L-aspartate + ATP = (2S)-2-[5-amino-1-(5-phospho-beta-D-ribosyl)imidazole-4-carboxamido]succinate + ADP + phosphate + 2 H(+). Its pathway is purine metabolism; IMP biosynthesis via de novo pathway; 5-amino-1-(5-phospho-D-ribosyl)imidazole-4-carboxamide from 5-amino-1-(5-phospho-D-ribosyl)imidazole-4-carboxylate: step 1/2. This is Phosphoribosylaminoimidazole-succinocarboxamide synthase from Sulfolobus acidocaldarius (strain ATCC 33909 / DSM 639 / JCM 8929 / NBRC 15157 / NCIMB 11770).